The sequence spans 333 residues: GTP 3',8-cyclase (333 aa).

In terms of domain architecture, Radical SAM core spans 7 to 221 (KFGRVHDYIR…FEACNEAGYE (215 aa)). Arg-16 provides a ligand contact to GTP. Cys-23 and Cys-27 together coordinate [4Fe-4S] cluster. Residue Tyr-29 coordinates S-adenosyl-L-methionine. Cys-30 lines the [4Fe-4S] cluster pocket. Arg-66 provides a ligand contact to GTP. Gly-70 contributes to the S-adenosyl-L-methionine binding site. Thr-97 lines the GTP pocket. Ser-121 provides a ligand contact to S-adenosyl-L-methionine. Lys-158 contacts GTP. Met-192 serves as a coordination point for S-adenosyl-L-methionine. Residues Cys-257 and Cys-260 each coordinate [4Fe-4S] cluster. 262 to 264 (RLR) contributes to the GTP binding site. Cys-274 is a [4Fe-4S] cluster binding site.

This sequence belongs to the radical SAM superfamily. MoaA family. Monomer and homodimer. It depends on [4Fe-4S] cluster as a cofactor.

It catalyses the reaction GTP + AH2 + S-adenosyl-L-methionine = (8S)-3',8-cyclo-7,8-dihydroguanosine 5'-triphosphate + 5'-deoxyadenosine + L-methionine + A + H(+). It participates in cofactor biosynthesis; molybdopterin biosynthesis. In terms of biological role, catalyzes the cyclization of GTP to (8S)-3',8-cyclo-7,8-dihydroguanosine 5'-triphosphate. The protein is GTP 3',8-cyclase of Listeria monocytogenes serotype 4b (strain CLIP80459).